The primary structure comprises 423 residues: UPF0597 protein CTC_02309 (423 aa).

This sequence belongs to the UPF0597 family.

The protein is UPF0597 protein CTC_02309 of Clostridium tetani (strain Massachusetts / E88).